The sequence spans 338 residues: Adenylosuccinate synthetase (338 aa).

GTP is bound by residues 12 to 18 (GDEGKGK) and 42 to 44 (GHT). Asp-13 acts as the Proton acceptor in catalysis. Mg(2+) is bound by residues Asp-13 and Gly-42. IMP is bound by residues 13–16 (DEGK), 40–43 (NAGH), Thr-127, Arg-141, Gln-179, Thr-194, and Arg-256. His-43 (proton donor) is an active-site residue. Substrate is bound at residue 252–258 (TVTGRRR). GTP-binding positions include Arg-258, 284–286 (CLD), and 324–326 (STG).

This sequence belongs to the adenylosuccinate synthetase family. In terms of assembly, homodimer. It depends on Mg(2+) as a cofactor.

The protein resides in the cytoplasm. It carries out the reaction IMP + L-aspartate + GTP = N(6)-(1,2-dicarboxyethyl)-AMP + GDP + phosphate + 2 H(+). The protein operates within purine metabolism; AMP biosynthesis via de novo pathway; AMP from IMP: step 1/2. Plays an important role in the de novo pathway of purine nucleotide biosynthesis. Catalyzes the first committed step in the biosynthesis of AMP from IMP. In Methanococcus vannielii (strain ATCC 35089 / DSM 1224 / JCM 13029 / OCM 148 / SB), this protein is Adenylosuccinate synthetase.